The primary structure comprises 224 residues: Holliday junction branch migration complex subunit RuvA (224 aa).

Positions 1-64 (MIGKVAGILD…EDLLQLFGFP (64 aa)) are domain I. Residues 65-143 (TMIEKEWHRL…ALMAMGGGTA (79 aa)) are domain II. Positions 141 to 185 (GTAALAPSEPPEPQPGTSSGSRRKTRAPEPPRPSHTADALSALAN) are disordered. The flexible linker stretch occupies residues 144–170 (ALAPSEPPEPQPGTSSGSRRKTRAPEP). The tract at residues 171-224 (PRPSHTADALSALANLGYQPTDAAQAVAQAAGESPDADTAALIRAALKLLAPKS) is domain III.

Belongs to the RuvA family. As to quaternary structure, homotetramer. Forms an RuvA(8)-RuvB(12)-Holliday junction (HJ) complex. HJ DNA is sandwiched between 2 RuvA tetramers; dsDNA enters through RuvA and exits via RuvB. An RuvB hexamer assembles on each DNA strand where it exits the tetramer. Each RuvB hexamer is contacted by two RuvA subunits (via domain III) on 2 adjacent RuvB subunits; this complex drives branch migration. In the full resolvosome a probable DNA-RuvA(4)-RuvB(12)-RuvC(2) complex forms which resolves the HJ.

The protein localises to the cytoplasm. Its function is as follows. The RuvA-RuvB-RuvC complex processes Holliday junction (HJ) DNA during genetic recombination and DNA repair, while the RuvA-RuvB complex plays an important role in the rescue of blocked DNA replication forks via replication fork reversal (RFR). RuvA specifically binds to HJ cruciform DNA, conferring on it an open structure. The RuvB hexamer acts as an ATP-dependent pump, pulling dsDNA into and through the RuvAB complex. HJ branch migration allows RuvC to scan DNA until it finds its consensus sequence, where it cleaves and resolves the cruciform DNA. This chain is Holliday junction branch migration complex subunit RuvA, found in Cereibacter sphaeroides (strain KD131 / KCTC 12085) (Rhodobacter sphaeroides).